Consider the following 529-residue polypeptide: Cytochrome P450 monooxygenase 45 (529 aa).

The helical transmembrane segment at 24–44 threads the bilayer; that stretch reads VLTICILALLTFVLREIVLYF. 2 N-linked (GlcNAc...) asparagine glycosylation sites follow: Asn185 and Asn322. Cys454 lines the heme pocket.

The protein belongs to the cytochrome P450 family. Heme is required as a cofactor.

It is found in the membrane. Its pathway is secondary metabolite biosynthesis. In terms of biological role, cytochrome P450 monooxygenase that is able to use trans-stilbene as a substrate for oxidation. The chain is Cytochrome P450 monooxygenase 45 from Postia placenta (strain ATCC 44394 / Madison 698-R) (Brown rot fungus).